The primary structure comprises 224 residues: tRNA (guanine-N(7)-)-methyltransferase (224 aa).

Residues glutamate 54, glutamate 79, glutamate 106, and aspartate 129 each coordinate S-adenosyl-L-methionine. Residue aspartate 129 is part of the active site. Lysine 133 and aspartate 165 together coordinate substrate.

It belongs to the class I-like SAM-binding methyltransferase superfamily. TrmB family.

It catalyses the reaction guanosine(46) in tRNA + S-adenosyl-L-methionine = N(7)-methylguanosine(46) in tRNA + S-adenosyl-L-homocysteine. It participates in tRNA modification; N(7)-methylguanine-tRNA biosynthesis. Functionally, catalyzes the formation of N(7)-methylguanine at position 46 (m7G46) in tRNA. In Chlamydia muridarum (strain MoPn / Nigg), this protein is tRNA (guanine-N(7)-)-methyltransferase.